A 152-amino-acid chain; its full sequence is UPF0266 membrane protein YobD (152 aa).

Over Met1–Asp5 the chain is Periplasmic. Residues Leu6–Met26 form a helical membrane-spanning segment. At Pro27–Arg44 the chain is on the cytoplasmic side. A helical membrane pass occupies residues Ile45 to His65. A topological domain (periplasmic) is located at residue Gly66. Residues Ala67–Ile87 traverse the membrane as a helical segment. Over Arg88–Gln152 the chain is Cytoplasmic.

The protein belongs to the UPF0266 family.

The protein localises to the cell inner membrane. The polypeptide is UPF0266 membrane protein YobD (yobD) (Salmonella typhi).